Consider the following 204-residue polypeptide: Holliday junction branch migration complex subunit RuvA (204 aa).

Residues 1-63 (MIGKLSGKVD…EEHIHLYGFL (63 aa)) form a domain I region. Residues 64 to 142 (TLEEKIFFNL…KISSGSAIIK (79 aa)) are domain II. Positions 143–149 (ESLNIKN) are flexible linker. Residues 150 to 204 (ITPVASNEVIKALVNLGFSRFEAQNAVQGIITQNPEISIDELIKTALKNRNSNFS) form a domain III region.

The protein belongs to the RuvA family. In terms of assembly, homotetramer. Forms an RuvA(8)-RuvB(12)-Holliday junction (HJ) complex. HJ DNA is sandwiched between 2 RuvA tetramers; dsDNA enters through RuvA and exits via RuvB. An RuvB hexamer assembles on each DNA strand where it exits the tetramer. Each RuvB hexamer is contacted by two RuvA subunits (via domain III) on 2 adjacent RuvB subunits; this complex drives branch migration. In the full resolvosome a probable DNA-RuvA(4)-RuvB(12)-RuvC(2) complex forms which resolves the HJ.

It localises to the cytoplasm. Functionally, the RuvA-RuvB-RuvC complex processes Holliday junction (HJ) DNA during genetic recombination and DNA repair, while the RuvA-RuvB complex plays an important role in the rescue of blocked DNA replication forks via replication fork reversal (RFR). RuvA specifically binds to HJ cruciform DNA, conferring on it an open structure. The RuvB hexamer acts as an ATP-dependent pump, pulling dsDNA into and through the RuvAB complex. HJ branch migration allows RuvC to scan DNA until it finds its consensus sequence, where it cleaves and resolves the cruciform DNA. The chain is Holliday junction branch migration complex subunit RuvA from Rickettsia rickettsii (strain Iowa).